Reading from the N-terminus, the 318-residue chain is Homoserine kinase (318 aa).

Position 97 to 107 (97 to 107 (PIGSGLGSSAC)) interacts with ATP.

This sequence belongs to the GHMP kinase family. Homoserine kinase subfamily.

The protein resides in the cytoplasm. It catalyses the reaction L-homoserine + ATP = O-phospho-L-homoserine + ADP + H(+). It participates in amino-acid biosynthesis; L-threonine biosynthesis; L-threonine from L-aspartate: step 4/5. Functionally, catalyzes the ATP-dependent phosphorylation of L-homoserine to L-homoserine phosphate. The protein is Homoserine kinase of Vibrio atlanticus (strain LGP32) (Vibrio splendidus (strain Mel32)).